The following is a 299-amino-acid chain: Very long chain fatty acid elongase 5 (299 aa).

Position 1 is an N-acetylmethionine (methionine 1). The next 6 membrane-spanning stretches (helical) occupy residues 26-46 (WFLL…LLIV), 64-84 (ILVV…CELV), 112-132 (VLRW…FFIL), 150-170 (MLNI…YFGA), 205-225 (GQLL…IWPC), and 226-246 (TFPL…IALF). The interval 275-299 (AAVNGHTNSFSPLENNVKPRKLRKD) is disordered. Residues 279–288 (GHTNSFSPLE) show a composition bias toward polar residues. Serine 285 bears the Phosphoserine mark.

Belongs to the ELO family. ELOVL5 subfamily. In terms of assembly, interacts with TECR.

It is found in the endoplasmic reticulum membrane. The protein localises to the cell projection. The protein resides in the dendrite. The catalysed reaction is a very-long-chain acyl-CoA + malonyl-CoA + H(+) = a very-long-chain 3-oxoacyl-CoA + CO2 + CoA. It carries out the reaction (6Z,9Z,12Z)-octadecatrienoyl-CoA + malonyl-CoA + H(+) = (8Z,11Z,14Z)-3-oxoeicosatrienoyl-CoA + CO2 + CoA. It catalyses the reaction (9Z,12Z,15Z)-octadecatrienoyl-CoA + malonyl-CoA + H(+) = (11Z,14Z,17Z)-3-oxoeicosatrienoyl-CoA + CO2 + CoA. The enzyme catalyses (9Z)-hexadecenoyl-CoA + malonyl-CoA + H(+) = 3-oxo-(11Z)-octadecenoyl-CoA + CO2 + CoA. The catalysed reaction is (9Z)-octadecenoyl-CoA + malonyl-CoA + H(+) = 3-oxo-(11Z)-eicosenoyl-CoA + CO2 + CoA. It carries out the reaction (11Z)-octadecenoyl-CoA + malonyl-CoA + H(+) = 3-oxo-(13Z)-eicosenoyl-CoA + CO2 + CoA. It catalyses the reaction (9Z,12Z)-octadecadienoyl-CoA + malonyl-CoA + H(+) = (11Z,14Z)-3-oxoicosa-11,14-dienoyl-CoA + CO2 + CoA. The enzyme catalyses (6Z,9Z,12Z,15Z)-octadecatetraenoyl-CoA + malonyl-CoA + H(+) = (8Z,11Z,14Z,17Z)-3-oxoicosatetraenoyl-CoA + CO2 + CoA. The catalysed reaction is (5Z,8Z,11Z,14Z)-eicosatetraenoyl-CoA + malonyl-CoA + H(+) = (7Z,10Z,13Z,16Z)-3-oxodocosatetraenoyl-CoA + CO2 + CoA. It carries out the reaction (5Z,8Z,11Z,14Z,17Z)-eicosapentaenoyl-CoA + malonyl-CoA + H(+) = 3-oxo-(7Z,10Z,13Z,16Z,19Z)-docosapentaenoyl-CoA + CO2 + CoA. It participates in lipid metabolism; polyunsaturated fatty acid biosynthesis. Functionally, catalyzes the first and rate-limiting reaction of the four reactions that constitute the long-chain fatty acids elongation cycle. This endoplasmic reticulum-bound enzymatic process allows the addition of 2 carbons to the chain of long- and very long-chain fatty acids (VLCFAs) per cycle. Condensing enzyme that acts specifically toward polyunsaturated acyl-CoA with the higher activity toward C18:3(n-6) acyl-CoA. May participate in the production of monounsaturated and of polyunsaturated VLCFAs of different chain lengths that are involved in multiple biological processes as precursors of membrane lipids and lipid mediators. In conditions where the essential linoleic and alpha linoleic fatty acids are lacking it is also involved in the synthesis of Mead acid from oleic acid. The sequence is that of Very long chain fatty acid elongase 5 from Macaca fascicularis (Crab-eating macaque).